Here is a 319-residue protein sequence, read N- to C-terminus: Malate dehydrogenase (319 aa).

NAD(+)-binding positions include 10–15 (GAGNIG) and D34. The substrate site is built by R83 and R89. NAD(+) is bound by residues N96 and 119 to 121 (ITN). Substrate contacts are provided by N121 and R152. Residue H176 is the Proton acceptor of the active site.

Belongs to the LDH/MDH superfamily. MDH type 3 family.

The enzyme catalyses (S)-malate + NAD(+) = oxaloacetate + NADH + H(+). Functionally, catalyzes the reversible oxidation of malate to oxaloacetate. This Francisella tularensis subsp. tularensis (strain FSC 198) protein is Malate dehydrogenase.